The following is a 579-amino-acid chain: UPF0324 membrane protein DVU_0943 (579 aa).

10 helical membrane passes run 26–45 (YWAI…LFLA), 193–215 (AFNI…AIGM), 225–243 (FLVG…QMMG), 250–272 (YWGI…TVGT), 305–327 (IGIP…TFIF), 369–391 (LTLS…PAFI), 430–452 (AATI…AVYW), 473–495 (FPKF…GSLG), 515–533 (LRGW…ATNF), and 546–568 (LILY…YIMF).

The protein belongs to the UPF0324 family.

Its subcellular location is the cell membrane. This is UPF0324 membrane protein DVU_0943 from Nitratidesulfovibrio vulgaris (strain ATCC 29579 / DSM 644 / CCUG 34227 / NCIMB 8303 / VKM B-1760 / Hildenborough) (Desulfovibrio vulgaris).